Here is an 86-residue protein sequence, read N- to C-terminus: Small ribosomal subunit protein eS27y (86 aa).

The C4-type zinc finger occupies 39–61; it reads CQGCFNITTVFSHSQTVVVCGNC.

It belongs to the eukaryotic ribosomal protein eS27 family. Zn(2+) serves as cofactor.

In terms of biological role, may be involved in the elimination of damaged mRNA after UV irradiation. The chain is Small ribosomal subunit protein eS27y (RPS27B) from Arabidopsis thaliana (Mouse-ear cress).